We begin with the raw amino-acid sequence, 314 residues long: Ribonuclease Z (314 aa).

Zn(2+) contacts are provided by H61, H63, D65, H66, H139, D211, and H269. D65 (proton acceptor) is an active-site residue.

Belongs to the RNase Z family. Homodimer. The cofactor is Zn(2+).

The catalysed reaction is Endonucleolytic cleavage of RNA, removing extra 3' nucleotides from tRNA precursor, generating 3' termini of tRNAs. A 3'-hydroxy group is left at the tRNA terminus and a 5'-phosphoryl group is left at the trailer molecule.. Zinc phosphodiesterase, which displays some tRNA 3'-processing endonuclease activity. Probably involved in tRNA maturation, by removing a 3'-trailer from precursor tRNA. The protein is Ribonuclease Z of Gemmatimonas aurantiaca (strain DSM 14586 / JCM 11422 / NBRC 100505 / T-27).